We begin with the raw amino-acid sequence, 189 residues long: Elongation factor P (189 aa).

It belongs to the elongation factor P family.

The protein resides in the cytoplasm. The protein operates within protein biosynthesis; polypeptide chain elongation. In terms of biological role, involved in peptide bond synthesis. Stimulates efficient translation and peptide-bond synthesis on native or reconstituted 70S ribosomes in vitro. Probably functions indirectly by altering the affinity of the ribosome for aminoacyl-tRNA, thus increasing their reactivity as acceptors for peptidyl transferase. The chain is Elongation factor P from Onion yellows phytoplasma (strain OY-M).